The primary structure comprises 870 residues: MVTADETVLATTTNTTSMSVEPTDPRSAGESSSDSEPDTIEQLKAEQREVMADAANGSEVNGNQENGKEEAASADVEVIEIDDTEESTDPSPDGSDENGDAASTSVPIEEEARKKDEGASEVTVASSEIEQDDDGDVMEITEEPNGKSEDTANGTVTEEVLDEEEPEPSVNGTTEIATEKEPEDSSMPVEQNGKGVKRPVECIELDDDDDDEIQEISTPAPAKKAKIDDVKATSVPEEDNNEQAQKRLLDKLEEYVKEQKDQPSSKSRKVLDTLLGAINAQVQKEPLSVRKLILDKVLVLPNTISFPPSQVCDLLIEHDPEMPLTKVINRMFGEERPKLSDSEKRERAQLKQHNPVPNMTKLLVDIGQDLVQEATYCDIVHAKNLPEVPKNLETYKQVAAQLKPVWETLKRKNEPYKLKMHRCDVCGFQTESKLVMSTHKENLHFTGSKFQCTMCKETDTSEQRMKDHYFETHLVIAKSEEKESKYPCAICEEDFNFKGVREQHYKQCKKDYIRIRNIMMPKQDDHLYINRWLWERPQLDPSILQQQQQAALQQAQQKKQQQLLHQQQAAQAAAAAQLLRKQQLQQQQQQQQARLREQQQAAQFRQVAQLLQQQSAQAQRAQQNQGNVNHNTLIAAMQASLRRGGQQGNSLAVSQLLQKQMAALKSQQGAQQLQAAVNSMRSQNSQKTPTHRSSKLVTTPSHATVGSSSAPTFVCEICDASVQEKEKYLQHLQTTHKQMVGKVLQDMSQGAPLACSRCRDRFWTYEGLERHLVMSHGLVTADLLLKAQKKEDGGRCKTCGKNYAFNMLQHLVADHQVKLCSAEIMYSCDVCAFKCSSYQTLEAHLTSNHPKGDKKTSTPAKKDDCITLDD.

The segment at 1-244 (MVTADETVLA…VPEEDNNEQA (244 aa)) is disordered. The span at 9–20 (LATTTNTTSMSV) shows a compositional bias: polar residues. A compositionally biased stretch (basic and acidic residues) spans 41–51 (EQLKAEQREVM). Composition is skewed to acidic residues over residues 77–99 (EVIE…DENG), 129–142 (IEQD…EITE), and 203–214 (IELDDDDDDEIQ). 2 C2H2-type zinc fingers span residues 421–444 (HRCD…ENLH) and 450–473 (FQCT…FETH). A CCHC-type zinc finger spans residues 486-508 (YPCAICEEDFNFKGVREQHYKQC). Polar residues-rich tracts occupy residues 673–688 (LQAA…SQKT) and 695–708 (KLVT…VGSS). Residues 673–708 (LQAAVNSMRSQNSQKTPTHRSSKLVTTPSHATVGSS) are disordered. 4 consecutive C2H2-type zinc fingers follow at residues 713-736 (FVCE…QTTH), 753-776 (LACS…VMSH), 794-815 (GRCK…VADH), and 826-849 (YSCD…TSNH). Positions 847–870 (SNHPKGDKKTSTPAKKDDCITLDD) are disordered. The span at 850 to 870 (PKGDKKTSTPAKKDDCITLDD) shows a compositional bias: basic and acidic residues.

Interacts with hda-1, let-418, lin-1, mog-1, mog-4, mog-5, mog-6, pie-1 and unc-98. Post-translationally, sumoylated. Expressed in somatic cells of embryos, the head, hypodermis and tail of larvae and the germline of adults, including oocytes but not mature sperm and spermatocytes.

Its subcellular location is the nucleus. In terms of biological role, has a broad role in development, specifically in the genetic pathway SynMuvB that negatively regulates specification of the vulval cell fate. Required for fem-3 3'-UTR-mediated repression in the regulation of the sperm/oocyte switch. Acts by regulating the translation of fem-3 mRNA, by binding to its 3'-UTR. The polypeptide is MOG interacting and ectopic P-granules protein 1 (Caenorhabditis elegans).